The sequence spans 212 residues: Protein-L-isoaspartate O-methyltransferase (212 aa).

The active site involves serine 60.

This sequence belongs to the methyltransferase superfamily. L-isoaspartyl/D-aspartyl protein methyltransferase family.

The protein localises to the cytoplasm. The enzyme catalyses [protein]-L-isoaspartate + S-adenosyl-L-methionine = [protein]-L-isoaspartate alpha-methyl ester + S-adenosyl-L-homocysteine. Functionally, catalyzes the methyl esterification of L-isoaspartyl residues in peptides and proteins that result from spontaneous decomposition of normal L-aspartyl and L-asparaginyl residues. It plays a role in the repair and/or degradation of damaged proteins. This Pseudomonas putida (strain ATCC 700007 / DSM 6899 / JCM 31910 / BCRC 17059 / LMG 24140 / F1) protein is Protein-L-isoaspartate O-methyltransferase.